We begin with the raw amino-acid sequence, 237 residues long: Thiamine-phosphate synthase (237 aa).

Residues 41-45 (QLRDK) and Asn-73 each bind 4-amino-2-methyl-5-(diphosphooxymethyl)pyrimidine. Asp-74 and Asp-93 together coordinate Mg(2+). Ser-112 is a binding site for 4-amino-2-methyl-5-(diphosphooxymethyl)pyrimidine. 143–145 (TPT) serves as a coordination point for 2-[(2R,5Z)-2-carboxy-4-methylthiazol-5(2H)-ylidene]ethyl phosphate. Residue Lys-146 coordinates 4-amino-2-methyl-5-(diphosphooxymethyl)pyrimidine. 2-[(2R,5Z)-2-carboxy-4-methylthiazol-5(2H)-ylidene]ethyl phosphate is bound at residue Gly-192.

Belongs to the thiamine-phosphate synthase family. Mg(2+) is required as a cofactor.

It catalyses the reaction 2-[(2R,5Z)-2-carboxy-4-methylthiazol-5(2H)-ylidene]ethyl phosphate + 4-amino-2-methyl-5-(diphosphooxymethyl)pyrimidine + 2 H(+) = thiamine phosphate + CO2 + diphosphate. The enzyme catalyses 2-(2-carboxy-4-methylthiazol-5-yl)ethyl phosphate + 4-amino-2-methyl-5-(diphosphooxymethyl)pyrimidine + 2 H(+) = thiamine phosphate + CO2 + diphosphate. The catalysed reaction is 4-methyl-5-(2-phosphooxyethyl)-thiazole + 4-amino-2-methyl-5-(diphosphooxymethyl)pyrimidine + H(+) = thiamine phosphate + diphosphate. It functions in the pathway cofactor biosynthesis; thiamine diphosphate biosynthesis; thiamine phosphate from 4-amino-2-methyl-5-diphosphomethylpyrimidine and 4-methyl-5-(2-phosphoethyl)-thiazole: step 1/1. Its function is as follows. Condenses 4-methyl-5-(beta-hydroxyethyl)thiazole monophosphate (THZ-P) and 2-methyl-4-amino-5-hydroxymethyl pyrimidine pyrophosphate (HMP-PP) to form thiamine monophosphate (TMP). The protein is Thiamine-phosphate synthase of Arthrobacter sp. (strain FB24).